The following is a 1832-amino-acid chain: Zinc finger protein 646 (1832 aa).

8 consecutive C2H2-type zinc fingers follow at residues 8-31, 48-70, 75-97, 239-261, 266-288, 294-316, 374-396, and 401-424; these read LSCS…ELLH, YRCQ…RRTH, FPCT…MRTH, YKCS…RQSH, YPCA…SRLH, YHCP…QQSH, FRCG…RKSH, and YPCS…RAHH. The segment at 26 to 47 is disordered; it reads HRELLHPSPNQDSEEADSIPRP. The segment covering 94-108 has biased composition (basic residues); the sequence is MRTHAPEGRRRHRPP. Residues 94–200 are disordered; sequence MRTHAPEGRR…TNSARAPPLP (107 aa). The segment covering 313–329 has biased composition (basic and acidic residues); the sequence is QQSHEGERQEPRWEEKG. Positions 313–346 are disordered; the sequence is QQSHEGERQEPRWEEKGMPTTNGHTDESSQDQLP. A Glycyl lysine isopeptide (Lys-Gly) (interchain with G-Cter in SUMO2) cross-link involves residue K451. 2 C2H2-type zinc fingers span residues 465 to 487 and 492 to 514; these read YKCS…RHSH and YQCS…VRVH. Residues K534 and K557 each participate in a glycyl lysine isopeptide (Lys-Gly) (interchain with G-Cter in SUMO2) cross-link. The C2H2-type 11 zinc-finger motif lies at 575–597; that stretch reads HICSICGLLFEDAESLERHGLTH. S612 is modified (phosphoserine). 2 consecutive C2H2-type zinc fingers follow at residues 617-639 and 644-666; these read FACR…RQTH and FSCG…LRRH. Residues 660–810 are disordered; the sequence is KNHLRRHSRR…QPNSSSHSAN (151 aa). Residues 661-678 are compositionally biased toward basic residues; that stretch reads NHLRRHSRRRSRRHRKRA. K688 is covalently cross-linked (Glycyl lysine isopeptide (Lys-Gly) (interchain with G-Cter in SUMO2)). Positions 735 to 767 are enriched in basic and acidic residues; it reads EGDKCGLERDETHFQGDKESGGTGEGLERKDAS. Residues 798 to 810 show a composition bias toward polar residues; it reads ATGQPNSSSHSAN. C2H2-type zinc fingers lie at residues 821–843, 848–870, and 881–904; these read HTCS…RPCH, YQCS…FQNH, and FLCC…RQAH. Residues 901 to 931 form a disordered region; that stretch reads RQAHSSSGMTEGSEEEGEEEGVAEAAPARSP. The span at 912 to 922 shows a compositional bias: acidic residues; it reads GSEEEGEEEGV. The segment at 958-980 adopts a C2H2-type 17; degenerate zinc-finger fold; it reads HICGCCGQTYDDLGSLERHHQSQ. C2H2-type zinc fingers lie at residues 1052-1074 and 1079-1101; these read FRCN…RKIH and FLCP…LRNH. A disordered region spans residues 1103 to 1148; the sequence is RCKGSEPQVGPIPEAAGSSELQVGPIPEGGSNKPQHMAEEGPGQAE. Residues K1157, K1168, and K1178 each participate in a glycyl lysine isopeptide (Lys-Gly) (interchain with G-Cter in SUMO2) cross-link. 6 consecutive C2H2-type zinc fingers follow at residues 1203–1225, 1230–1252, 1258–1280, 1299–1321, 1326–1348, and 1364–1386; these read FSCE…RQSH, FGCQ…RRIH, FRCS…QRVH, FRCG…RRSH, YSCP…QRLH, and VRCA…LREH. The tract at residues 1274–1294 is disordered; sequence ASHQRVHMERRGGGGTRKATR. Disordered stretches follow at residues 1377–1481 and 1509–1529; these read GSLE…WVPQ and TLSH…QPGS. Positions 1378–1393 are enriched in basic and acidic residues; it reads SLERHLREHEETEREP. The span at 1406–1417 shows a compositional bias: polar residues; that stretch reads SEANLTGSQGLE. Residues 1427–1438 show a composition bias toward basic and acidic residues; sequence PHLEDGVPRPGE. Residues 1460-1475 are compositionally biased toward gly residues; sequence GKAGGWPVGGGLGNHS. 6 C2H2-type zinc fingers span residues 1557-1579, 1585-1607, 1677-1699, 1704-1726, 1732-1754, and 1761-1783; these read HYCL…SHNH, FACP…LQAH, FRCT…QKAH, YPCS…SRTH, HCCS…GRVH, and FTCP…QQQH. A disordered region spans residues 1606–1672; sequence AHARGHSQVP…QAVTSMAAED (67 aa). Residues 1781-1832 are disordered; that stretch reads QQHQEEWTVAGSGAPVAPVTGRGDLPLPPPPTPTTPLLDPSPQWPADLSFSL.

Belongs to the krueppel C2H2-type zinc-finger protein family.

Its subcellular location is the nucleus. In terms of biological role, may be involved in transcriptional regulation. The protein is Zinc finger protein 646 of Homo sapiens (Human).